A 203-amino-acid chain; its full sequence is Thymidine kinase (203 aa).

Residues 9 to 16 and 87 to 90 contribute to the ATP site; these read ATMNAGKT and DEAQ. Residue Glu88 is the Proton acceptor of the active site. Zn(2+) is bound by residues Cys145, Cys147, Cys181, and His184.

It belongs to the thymidine kinase family. Homotetramer.

It localises to the cytoplasm. The enzyme catalyses thymidine + ATP = dTMP + ADP + H(+). This chain is Thymidine kinase, found in Mesorhizobium japonicum (strain LMG 29417 / CECT 9101 / MAFF 303099) (Mesorhizobium loti (strain MAFF 303099)).